Consider the following 455-residue polypeptide: Chromosomal replication initiator protein DnaA (455 aa).

The segment at 1-74 (MSEQEIWEKV…LYEAIGHEIA (74 aa)) is domain I, interacts with DnaA modulators. Residues 74–116 (APVFYTEEELKSLHTSEQKEENQPEQPAKKYTPGVDEAVIGGE) form a domain II region. The segment covering 85–95 (SLHTSEQKEEN) has biased composition (basic and acidic residues). The tract at residues 85 to 104 (SLHTSEQKEENQPEQPAKKY) is disordered. Residues 117-333 (QFNTHNTFET…GALTRVLAFS (217 aa)) form a domain III, AAA+ region region. ATP-binding residues include G161, G163, K164, and T165. The segment at 334 to 455 (KLQGQPITTE…ENLEKEIRNQ (122 aa)) is domain IV, binds dsDNA.

Belongs to the DnaA family. Oligomerizes as a right-handed, spiral filament on DNA at oriC.

The protein localises to the cytoplasm. Its function is as follows. Plays an essential role in the initiation and regulation of chromosomal replication. ATP-DnaA binds to the origin of replication (oriC) to initiate formation of the DNA replication initiation complex once per cell cycle. Binds the DnaA box (a 9 base pair repeat at the origin) and separates the double-stranded (ds)DNA. Forms a right-handed helical filament on oriC DNA; dsDNA binds to the exterior of the filament while single-stranded (ss)DNA is stabiized in the filament's interior. The ATP-DnaA-oriC complex binds and stabilizes one strand of the AT-rich DNA unwinding element (DUE), permitting loading of DNA polymerase. After initiation quickly degrades to an ADP-DnaA complex that is not apt for DNA replication. Binds acidic phospholipids. The sequence is that of Chromosomal replication initiator protein DnaA from Staphylococcus saprophyticus subsp. saprophyticus (strain ATCC 15305 / DSM 20229 / NCIMB 8711 / NCTC 7292 / S-41).